The chain runs to 228 residues: Protein ULTRAPETALA 2 (228 aa).

One can recognise an SAND domain in the interval 14-121 (EELQEISGVH…NKALKNSNVS (108 aa)).

In terms of tissue distribution, expressed in influorescence, pollen and siliques, with a higher expression in influorescence.

It is found in the cytoplasm. Its subcellular location is the nucleus. Its function is as follows. Putative transcription factor that acts as a key negative regulator of cell accumulation in shoot and floral meristems. Negatively regulates the size of the WUSCHEL (WUS)-expressing organizing center in inflorescence meristems. May act by down-regulating expression of WUS. Can compensate for mutant ULT1 protein when overexpressed. The protein is Protein ULTRAPETALA 2 (ULT2) of Arabidopsis thaliana (Mouse-ear cress).